The sequence spans 116 residues: Spexin (116 aa).

The N-terminal stretch at 1–26 (MKGFKSLVVMTLTLFLVFSFMGNCNS) is a signal peptide. A propeptide spanning residues 27 to 35 (APQRLFERR) is cleaved from the precursor. Q49 is modified (glutamine amide). Propeptides lie at residues 50–116 (GRRF…LLNW) and 74–116 (PNSQ…LLNW). The span at 53-73 (FLSDQSRRKDLSDRPPLERRS) shows a compositional bias: basic and acidic residues. The disordered stretch occupies residues 53-80 (FLSDQSRRKDLSDRPPLERRSPNSQQLT).

It belongs to the spexin family.

It is found in the secreted. The protein localises to the extracellular space. Its subcellular location is the cytoplasmic vesicle. It localises to the secretory vesicle. In terms of biological role, plays a role as a central modulator of cardiovascular and renal function and nociception. Also plays a role in energy metabolism and storage. Inhibits adrenocortical cell proliferation with minor stimulation on corticosteroid release. Acts as a ligand for galanin receptors GALR2 and GALR3. Intracerebroventricular administration of the peptide induces an increase in arterial blood pressure, a decrease in both heart rate and renal excretion and delayed natriuresis. Intraventricular administration of the peptide induces antinociceptive activity. Also induces contraction of muscarinic-like stomach smooth muscles. Intraperitoneal administration of the peptide induces a reduction in food consumption and body weight. Inhibits long chain fatty acid uptake into adipocytes. Its function is as follows. Intracerebroventricular administration of the peptide induces a decrease in heart rate, but no change in arterial pressure, and an increase in urine flow rate. Intraventricular administration of the peptide induces antinociceptive activity. In Bos taurus (Bovine), this protein is Spexin (SPX).